A 136-amino-acid chain; its full sequence is Small ribosomal subunit protein uS8c (136 aa).

It belongs to the universal ribosomal protein uS8 family. Part of the 30S ribosomal subunit.

The protein resides in the plastid. The protein localises to the chloroplast. One of the primary rRNA binding proteins, it binds directly to 16S rRNA central domain where it helps coordinate assembly of the platform of the 30S subunit. The sequence is that of Small ribosomal subunit protein uS8c (rps8) from Agrostis stolonifera (Creeping bentgrass).